Consider the following 449-residue polypeptide: Tubulin alpha chain (449 aa).

Residue Q11 participates in GTP binding. K40 carries the N6-acetyllysine modification. Residues E71, S140, G144, T145, T179, N206, and N228 each coordinate GTP. Residue E71 participates in Mg(2+) binding. E254 is a catalytic residue.

It belongs to the tubulin family. In terms of assembly, dimer of alpha and beta chains. A typical microtubule is a hollow water-filled tube with an outer diameter of 25 nm and an inner diameter of 15 nM. Alpha-beta heterodimers associate head-to-tail to form protofilaments running lengthwise along the microtubule wall with the beta-tubulin subunit facing the microtubule plus end conferring a structural polarity. Microtubules usually have 13 protofilaments but different protofilament numbers can be found in some organisms and specialized cells. Mg(2+) is required as a cofactor. Undergoes a tyrosination/detyrosination cycle, the cyclic removal and re-addition of a C-terminal tyrosine residue by the enzymes tubulin tyrosine carboxypeptidase (TTCP) and tubulin tyrosine ligase (TTL), respectively. In terms of processing, some glutamate residues at the C-terminus are either polyglutamylated or polyglycylated. These 2 modifications occur exclusively on glutamate residues and result in either polyglutamate or polyglycine chains on the gamma-carboxyl group. Both modifications can coexist on the same protein on adjacent residues, and lowering polyglycylation levels increases polyglutamylation, and reciprocally. The precise function of such modifications is still unclear but they regulate the assembly and dynamics of axonemal microtubules. Post-translationally, acetylation of alpha chains at Lys-40 stabilizes microtubules and affects affinity and processivity of microtubule motors. This modification has a role in multiple cellular functions, ranging from cell motility, cell cycle progression or cell differentiation to intracellular trafficking and signaling.

It is found in the cytoplasm. The protein resides in the cytoskeleton. It carries out the reaction GTP + H2O = GDP + phosphate + H(+). Tubulin is the major constituent of microtubules, a cylinder consisting of laterally associated linear protofilaments composed of alpha- and beta-tubulin heterodimers. Microtubules grow by the addition of GTP-tubulin dimers to the microtubule end, where a stabilizing cap forms. Below the cap, tubulin dimers are in GDP-bound state, owing to GTPase activity of alpha-tubulin. In Tetrahymena thermophila, this protein is Tubulin alpha chain.